We begin with the raw amino-acid sequence, 294 residues long: MHPRFQTAFAQLADNLQSALEPILADKYFPALLTGEQVSSLKSATGLDEDALAFALLPLAAACARTPLSNFNVGAIARGVSGTWYFGANMEFIGATMQQTVHAEQSAISHAWLSGEKALAAITVNYTPCGHCRQFMNELNSGLDLRIHLPGREAHALRDYLADAFGPKDLEIKTLLMDEQDHGYALTGDALSQAAIAAANRSHMPYSKSPSGVALECKDGRIFSGSYAENAAFNPTLPPLQGALILLNLKGYDYPDIQRAVLAEKADAPLIQWDATSATLKALGCHNIDRVLLA.

CMP/dCMP-type deaminase domains lie at 48-168 (DEDA…FGPK) and 186-294 (LTGD…VLLA). 89–91 (NME) serves as a coordination point for substrate. A Zn(2+)-binding site is contributed by histidine 102. Glutamate 104 serves as the catalytic Proton donor. Positions 129 and 132 each coordinate Zn(2+).

The protein belongs to the cytidine and deoxycytidylate deaminase family. Homodimer. Zn(2+) serves as cofactor.

The enzyme catalyses cytidine + H2O + H(+) = uridine + NH4(+). It catalyses the reaction 2'-deoxycytidine + H2O + H(+) = 2'-deoxyuridine + NH4(+). Functionally, this enzyme scavenges exogenous and endogenous cytidine and 2'-deoxycytidine for UMP synthesis. In Escherichia coli O157:H7, this protein is Cytidine deaminase.